Here is a 128-residue protein sequence, read N- to C-terminus: Large ribosomal subunit protein mL52 (128 aa).

A mitochondrion-targeting transit peptide spans 1–28 (MLQIAKLCLATSGRITAQRYVAVTTARA).

It belongs to the mitochondrion-specific ribosomal protein mL52 family. In terms of assembly, component of the mitochondrial ribosome large subunit (39S) which comprises a 16S rRNA and about 50 distinct proteins.

It localises to the mitochondrion. The sequence is that of Large ribosomal subunit protein mL52 (mRpL52) from Drosophila pseudoobscura pseudoobscura (Fruit fly).